The chain runs to 643 residues: Threonine--tRNA ligase (643 aa).

A TGS domain is found at Met-1 to Lys-61. The interval Asp-246–Pro-539 is catalytic. Zn(2+)-binding residues include Cys-339, His-390, and His-516.

The protein belongs to the class-II aminoacyl-tRNA synthetase family. In terms of assembly, homodimer. Zn(2+) serves as cofactor.

Its subcellular location is the cytoplasm. It carries out the reaction tRNA(Thr) + L-threonine + ATP = L-threonyl-tRNA(Thr) + AMP + diphosphate + H(+). In terms of biological role, catalyzes the attachment of threonine to tRNA(Thr) in a two-step reaction: L-threonine is first activated by ATP to form Thr-AMP and then transferred to the acceptor end of tRNA(Thr). Also edits incorrectly charged L-seryl-tRNA(Thr). The sequence is that of Threonine--tRNA ligase from Sulfurihydrogenibium sp. (strain YO3AOP1).